Reading from the N-terminus, the 876-residue chain is Probable inactive ATP-dependent zinc metalloprotease FTSHI 2, chloroplastic (876 aa).

Residues 1–20 (MACRFPLHSSSPSQFLSPEN) are disordered. Residues 1–32 (MACRFPLHSSSPSQFLSPENRQRLPRNYPSIS) constitute a chloroplast transit peptide. Residues 8 to 19 (HSSSPSQFLSPE) show a composition bias toward polar residues. Residues 59-79 (LLAIPITLTIISASLAKPSFA) form a helical membrane-spanning segment. The tract at residues 256-276 (TMKAQKKQQERKKRKAVRKKK) is disordered. Residues 258–275 (KAQKKQQERKKRKAVRKK) show a composition bias toward basic residues. The helical transmembrane segment at 304-324 (VATALGLVFFYIFYRVVVLNY) threads the bilayer. The segment at 350–370 (ELEREMEGIEEEDEEVEEGTG) is disordered. The span at 357 to 368 (GIEEEDEEVEEG) shows a compositional bias: acidic residues. 450-457 (GPPGVGKT) is an ATP binding site.

In the N-terminal section; belongs to the AAA ATPase family. The protein in the C-terminal section; belongs to the peptidase M41 family. Homooligomer. Interacts with FtsHi4.

Its subcellular location is the plastid. The protein resides in the chloroplast membrane. Functionally, required for plastid development during embryogenesis. Might be involved in chaperone functions or play a structural role in the thylakoid FtsH complex. This chain is Probable inactive ATP-dependent zinc metalloprotease FTSHI 2, chloroplastic, found in Arabidopsis thaliana (Mouse-ear cress).